A 289-amino-acid polypeptide reads, in one-letter code: ATP phosphoribosyltransferase (289 aa).

Belongs to the ATP phosphoribosyltransferase family. Long subfamily. Mg(2+) serves as cofactor.

It localises to the cytoplasm. The enzyme catalyses 1-(5-phospho-beta-D-ribosyl)-ATP + diphosphate = 5-phospho-alpha-D-ribose 1-diphosphate + ATP. Its pathway is amino-acid biosynthesis; L-histidine biosynthesis; L-histidine from 5-phospho-alpha-D-ribose 1-diphosphate: step 1/9. With respect to regulation, feedback inhibited by histidine. Its function is as follows. Catalyzes the condensation of ATP and 5-phosphoribose 1-diphosphate to form N'-(5'-phosphoribosyl)-ATP (PR-ATP). Has a crucial role in the pathway because the rate of histidine biosynthesis seems to be controlled primarily by regulation of HisG enzymatic activity. The sequence is that of ATP phosphoribosyltransferase from Methanosarcina barkeri (strain Fusaro / DSM 804).